The chain runs to 332 residues: Tryptophan--tRNA ligase (332 aa).

ATP is bound by residues Thr11–Thr13 and Gly19–Asn20. The 'HIGH' region motif lies at Ser12–Asn20. L-tryptophan is bound at residue Asp140. ATP contacts are provided by residues Gly152–Asp154, Ile191, and Lys200–Ser204. The 'KMSKS' region signature appears at Lys200 to Ser204.

Belongs to the class-I aminoacyl-tRNA synthetase family. In terms of assembly, homodimer.

It is found in the cytoplasm. The enzyme catalyses tRNA(Trp) + L-tryptophan + ATP = L-tryptophyl-tRNA(Trp) + AMP + diphosphate + H(+). Its function is as follows. Catalyzes the attachment of tryptophan to tRNA(Trp). The polypeptide is Tryptophan--tRNA ligase (Mycoplasmopsis pulmonis (strain UAB CTIP) (Mycoplasma pulmonis)).